The following is a 1135-amino-acid chain: Envelopment polyprotein (1135 aa).

The first 35 residues, Met-1 to Ala-35, serve as a signal peptide directing secretion. The Lumenal segment spans residues Lys-36 to Thr-314. A Cell attachment site motif is present at residues Arg-41–Asp-43. 2 cysteine pairs are disulfide-bonded: Cys-114/Cys-145 and Cys-122/Cys-156. The N-linked (GlcNAc...) asparagine; by host glycan is linked to Asn-116. Residues Leu-177 to Leu-195 are non-covalent dimerization. A glycan (N-linked (GlcNAc...) asparagine; by host) is linked at Asn-210. A disulfide bond links Cys-224 and Cys-285. A helical transmembrane segment spans residues Ala-315–Cys-366. Over Leu-367–Ser-484 the chain is Cytoplasmic. The tract at residues Leu-437–Ser-484 is signal for signal peptide peptidase. Residues Lys-485–Arg-1067 are Lumenal-facing. Asn-605 and Asn-980 each carry an N-linked (GlcNAc...) asparagine; by host glycan. Residues Val-1068 to Ile-1088 traverse the membrane as a helical segment. Over Cys-1089–Val-1135 the chain is Cytoplasmic.

It belongs to the tospovirus envelope glycoprotein family. As to quaternary structure, homodimer; disulfide-linked. Heterodimer with Glycoprotein C. Interacts with nucleoprotein. In terms of assembly, heterodimer with Glycoprotein N. Interacts with nucleoprotein. In terms of processing, specific enzymatic cleavages in vivo yield mature proteins including Glycoprotein N and Glycoprotein C. Post-translationally, glycosylated with O-linked glycans. Glycosylation is essential for proper subcellular location. Cleaved at acidic pH.

It is found in the virion membrane. Its subcellular location is the host Golgi apparatus membrane. It localises to the host endoplasmic reticulum membrane. Forms the spikes present at the surface of the virion together with Glycoprotein C. They are able to attach the virion to a cell receptor and to promote fusion of membranes after endocytosis of the virion. Plays a role in virus binding and/or entry into the vector midgut. Its function is as follows. Forms the spikes present at the surface of the virion together with Glycoprotein N. They are able to attach the virion to a cell receptor and to promote fusion of membranes after endocytosis of the virion. Probable class II fusion protein. This chain is Envelopment polyprotein (GP), found in Tomato spotted wilt virus (strain Brazilian Br-01) (TSWV).